The following is a 427-amino-acid chain: Transcription termination factor Rho (427 aa).

Residues 55–130 form the Rho RNA-BD domain; it reads YFFGEGVLEI…IKIEAINYRP (76 aa). Residues 173-178, 185-190, and Arg-216 each bind ATP; these read GKGQRG and KAGKTT.

It belongs to the Rho family. As to quaternary structure, homohexamer. The homohexamer assembles into an open ring structure.

Functionally, facilitates transcription termination by a mechanism that involves Rho binding to the nascent RNA, activation of Rho's RNA-dependent ATPase activity, and release of the mRNA from the DNA template. The chain is Transcription termination factor Rho from Thermotoga maritima (strain ATCC 43589 / DSM 3109 / JCM 10099 / NBRC 100826 / MSB8).